The chain runs to 67 residues: MPKMKTRKTAAKRFHVTGTGKIMRSKGMKSHLRRNKSARVRRQFDEMSQVAGVDRARIQKLIPYGVS.

It belongs to the bacterial ribosomal protein bL35 family.

This is Large ribosomal subunit protein bL35 from Dehalococcoides mccartyi (strain ATCC BAA-2266 / KCTC 15142 / 195) (Dehalococcoides ethenogenes (strain 195)).